Consider the following 407-residue polypeptide: Imidazolonepropionase (407 aa).

2 residues coordinate Fe(3+): His-74 and His-76. His-74 and His-76 together coordinate Zn(2+). Residues Arg-83, Tyr-146, and His-179 each coordinate 4-imidazolone-5-propanoate. N-formimidoyl-L-glutamate is bound at residue Tyr-146. Residue His-244 participates in Fe(3+) binding. His-244 lines the Zn(2+) pocket. Gln-247 contacts 4-imidazolone-5-propanoate. Asp-319 contributes to the Fe(3+) binding site. Asp-319 is a binding site for Zn(2+). 2 residues coordinate N-formimidoyl-L-glutamate: Asn-321 and Gly-323. Position 324 (Thr-324) interacts with 4-imidazolone-5-propanoate.

Belongs to the metallo-dependent hydrolases superfamily. HutI family. The cofactor is Zn(2+). Requires Fe(3+) as cofactor.

It localises to the cytoplasm. The enzyme catalyses 4-imidazolone-5-propanoate + H2O = N-formimidoyl-L-glutamate. Its pathway is amino-acid degradation; L-histidine degradation into L-glutamate; N-formimidoyl-L-glutamate from L-histidine: step 3/3. Its function is as follows. Catalyzes the hydrolytic cleavage of the carbon-nitrogen bond in imidazolone-5-propanoate to yield N-formimidoyl-L-glutamate. It is the third step in the universal histidine degradation pathway. In Salmonella typhimurium (strain LT2 / SGSC1412 / ATCC 700720), this protein is Imidazolonepropionase.